The following is a 127-amino-acid chain: Large ribosomal subunit protein bL17 (127 aa).

Belongs to the bacterial ribosomal protein bL17 family. Part of the 50S ribosomal subunit. Contacts protein L32.

In Xanthomonas campestris pv. campestris (strain 8004), this protein is Large ribosomal subunit protein bL17.